A 624-amino-acid polypeptide reads, in one-letter code: Adenine deaminase 1 (624 aa).

This sequence belongs to the metallo-dependent hydrolases superfamily. Adenine deaminase family. Mn(2+) is required as a cofactor.

It catalyses the reaction adenine + H2O + H(+) = hypoxanthine + NH4(+). The sequence is that of Adenine deaminase 1 from Bradyrhizobium sp. (strain ORS 278).